Reading from the N-terminus, the 438-residue chain is 3-phosphoshikimate 1-carboxyvinyltransferase (438 aa).

Residues lysine 26, serine 27, and arginine 31 each coordinate 3-phosphoshikimate. A phosphoenolpyruvate-binding site is contributed by lysine 26. Glycine 99 and arginine 127 together coordinate phosphoenolpyruvate. The 3-phosphoshikimate site is built by serine 170, serine 171, glutamine 172, serine 199, glutamate 314, and histidine 343. Residue glutamine 172 participates in phosphoenolpyruvate binding. The active-site Proton acceptor is the glutamate 314. Positions 347, 388, and 413 each coordinate phosphoenolpyruvate.

Belongs to the EPSP synthase family. As to quaternary structure, monomer.

The protein resides in the cytoplasm. It carries out the reaction 3-phosphoshikimate + phosphoenolpyruvate = 5-O-(1-carboxyvinyl)-3-phosphoshikimate + phosphate. It participates in metabolic intermediate biosynthesis; chorismate biosynthesis; chorismate from D-erythrose 4-phosphate and phosphoenolpyruvate: step 6/7. Its function is as follows. Catalyzes the transfer of the enolpyruvyl moiety of phosphoenolpyruvate (PEP) to the 5-hydroxyl of shikimate-3-phosphate (S3P) to produce enolpyruvyl shikimate-3-phosphate and inorganic phosphate. This is 3-phosphoshikimate 1-carboxyvinyltransferase from Mycobacterium sp. (strain JLS).